A 294-amino-acid chain; its full sequence is Indole-3-glycerol phosphate synthase (294 aa).

This sequence belongs to the TrpC family.

The catalysed reaction is 1-(2-carboxyphenylamino)-1-deoxy-D-ribulose 5-phosphate + H(+) = (1S,2R)-1-C-(indol-3-yl)glycerol 3-phosphate + CO2 + H2O. It participates in amino-acid biosynthesis; L-tryptophan biosynthesis; L-tryptophan from chorismate: step 4/5. In Synechococcus sp. (strain RCC307), this protein is Indole-3-glycerol phosphate synthase.